Here is a 349-residue protein sequence, read N- to C-terminus: Transmembrane protein 255A (349 aa).

A run of 4 helical transmembrane segments spans residues 30-50, 57-77, 89-109, and 226-246; these read IYVT…GLAA, VTVG…LGII, LVAS…CAIV, and TILN…LGGF. The disordered stretch occupies residues 301 to 329; sequence VFPSSPPSGLSDEPQSASPSPSYMWSSSA. Residues 316–329 are compositionally biased toward low complexity; it reads SASPSPSYMWSSSA.

It belongs to the TMEM255 family.

The protein resides in the membrane. The polypeptide is Transmembrane protein 255A (TMEM255A) (Macaca fascicularis (Crab-eating macaque)).